Reading from the N-terminus, the 242-residue chain is tRNA (guanine-N(1)-)-methyltransferase (242 aa).

S-adenosyl-L-methionine-binding positions include glycine 115 and 134-139; that span reads LGDFVL. A compositionally biased stretch (basic and acidic residues) spans 210–224; it reads QEQREQRTAARRPDL. Residues 210 to 242 form a disordered region; that stretch reads QEQREQRTAARRPDLMQRWQQRFGADNDSEHRA.

The protein belongs to the RNA methyltransferase TrmD family. Homodimer.

The protein resides in the cytoplasm. It catalyses the reaction guanosine(37) in tRNA + S-adenosyl-L-methionine = N(1)-methylguanosine(37) in tRNA + S-adenosyl-L-homocysteine + H(+). Specifically methylates guanosine-37 in various tRNAs. This Synechococcus sp. (strain WH7803) protein is tRNA (guanine-N(1)-)-methyltransferase.